The chain runs to 444 residues: D(2) dopamine receptor (444 aa).

Residues 1–37 (MDPLNLSWYDDDLERQNWSRPFNGSEGKADRPHYNYY) are Extracellular-facing. N-linked (GlcNAc...) asparagine glycans are attached at residues Asn5, Asn17, and Asn23. The helical transmembrane segment at 38–60 (AMLLTLLIFIIVFGNVLVCMAVS) threads the bilayer. At 61–70 (REKALQTTTN) the chain is on the cytoplasmic side. The helical transmembrane segment at 71 to 93 (YLIVSLAVADLLVATLVMPWVVY) threads the bilayer. Topologically, residues 94–108 (LEVVGEWKFSRIHCD) are extracellular. Residues Cys107 and Cys182 are joined by a disulfide bond. The helical transmembrane segment at 109–130 (IFVTLDVMMCTASILNLCAISI) threads the bilayer. Residues 131–151 (DRYTAVAMPMLYNTRYSSKRR) are Cytoplasmic-facing. The chain crosses the membrane as a helical span at residues 152–172 (VTVMIAIVWVLSFTISCPLLF). Residues 173-188 (GLNNTDQNECIIANPA) lie on the Extracellular side of the membrane. Residues 189-213 (FVVYSSIVSFYVPFIVTLLVYIKIY) form a helical membrane-spanning segment. Residues 211–374 (KIYIVLRKRR…SQQKEKKATQ (164 aa)) form an interaction with PPP1R9B region. Over 214–374 (IVLRKRRKRV…SQQKEKKATQ (161 aa)) the chain is Cytoplasmic. The tract at residues 282–329 (EMLSSTSPPERTRYSPIPPSHHQLTLPDPSHHGLHSNPDSPAKPEKNG) is disordered. Residues 375 to 396 (MLAIVLGVFIICWLPFFITHIL) traverse the membrane as a helical segment. The Extracellular portion of the chain corresponds to 397-410 (NIHCDCNIPPVLYS). Cys400 and Cys402 are disulfide-bonded. A helical transmembrane segment spans residues 411 to 432 (AFTWLGYVNSAVNPIIYTTFNI). At 433 to 444 (EFRKAFMKILHC) the chain is on the cytoplasmic side. Cys444 carries the S-palmitoyl cysteine lipid modification.

The protein belongs to the G-protein coupled receptor 1 family. In terms of assembly, forms homo- and heterooligomers with DRD4. The interaction with DRD4 may modulate agonist-induced downstream signaling. Interacts with CADPS and CADPS2. Interacts with GPRASP1, PPP1R9B and CLIC6. Interacts with ARRB2. Interacts with HTR2A. Interacts with DRD1. Interacts with KCNA2. Palmitoylated. Palmitoylation which is required for proper localization to the plasma membrane and stability of the receptor could be carried on by ZDHHC4, ZDHHC3 and ZDHHC8. As to expression, expressed in the anterior lobe of the pituitary gland. Expressed ventral tegmental area of the midbrain and the pars compacta of the substantia nigra. Expressed seven times more than isoform short in the caudate nucleus. In terms of tissue distribution, expressed in the anterior lobe of the pituitary gland. Expressed in the caudate nucleus. Not expressed in the wider brain.

It is found in the cell membrane. The protein resides in the golgi apparatus membrane. Functionally, dopamine receptor whose activity is mediated by G proteins which inhibit adenylyl cyclase. Positively regulates postnatal regression of retinal hyaloid vessels via suppression of VEGFR2/KDR activity, downstream of OPN5. The chain is D(2) dopamine receptor (Drd2) from Rattus norvegicus (Rat).